The chain runs to 1256 residues: MELAAWCRWGFLLALLSPGAAGTQVCTGTDMKLRLPASPETHLDMLRHLYQGCQVVQGNLELTYLPANASLSFLQDIQEVQGYMLIAHNRVKHVPLQRLRIVRGTQLFEDKYALAVLDNRDPLDNVTTAAPGRTPEGLRELQLRSLTEILKGGVLIRGNPQLCYQDMVLWKDVLRKNNQLAPVDMDTNRSRACPPCAPTCKDNHCWGESPEDCQILTGTICTSGCARCKGRLPTDCCHEQCAAGCTGPKHSDCLACLHFNHSGICELHCPALITYNTDTFESMLNPEGRYTFGASCVTTCPYNYLSTEVGSCTLVCPPNNQEVTAEDGTQRCEKCSKPCAGVCYGLGMEHLRGARAITSDNIQEFAGCKKIFGSLAFLPESFDGNPSSGVAPLKPEHLQVFETLEEITGYLYISAWPESFQDLSVFQNLRVIRGRILHDGAYSLTLQGLGIHSLGLRSLRELGSGLALIHRNTHLCFVNTVPWDQLFRNPHQALLHSGNRPEEACGLEGLVCNSLCARGHCWGPGPTQCVNCSQFLRGQECVEECRVWKGLPREYVRGKHCLPCHPECQPQNSSETCYGSEADQCEACAHYKDSSSCVARCPSGVKPDLSYMPIWKYPDEEGICQPCPINCTHSCVDLDERGCPAEQRASPVTFIIATVVGVLLFLIIVVVIGILIKRRRQKIRKYTMRRLLQETELVEPLTPSGAVPNQAQMRILKETELRKLKVLGSGAFGTVYKGIWIPDGENVKIPVAIKVLRENTSPKANKEILDEAYVMAGVGSPYVSRLLGICLTSTVQLVTQLMPYGCLLDHVREHRGRLGSQDLLNWCVQIAKGMSYLEEVRLVHRDLAARNVLVKSPNHVKITDFGLARLLDIDETEYHADGGKVPIKWMALESILRRRFTHQSDVWSYGVTVWELMTFGAKPYDGIPAREIPDLLEKGERLPQPPICTIDVYMIMVKCWMIDSECRPRFRELVSEFSRMARDPQRFVVIQNEDLGPSSPMDSTFYRSLLEDDDMGELVDAEEYLVPQQGFFSPDPALGTGSTAHRRHRSSSARSGGGELTLGLEPSEEEPPRSPLAPSEGAGSDVFDGDLAVGVTKGLQSLSPHDLSPLQRYSEDPTLPLPPETDGYVAPLACSPQPEYVNQPEVRPQSPLTPEGPPPPIRPAGATLERPKTLSPGKNGVVKDVFAFGGAVENPEYLAPRAGTASQPHPSPAFSPAFDNLYYWDQNSSEQGPPPSTFEGTPTAENPEYLGLDVPV.

Residues 1–22 (MELAAWCRWGFLLALLSPGAAG) form the signal peptide. Over 23 to 653 (TQVCTGTDMK…PAEQRASPVT (631 aa)) the chain is Extracellular. A disulfide bridge connects residues C26 and C53. N-linked (GlcNAc...) asparagine glycosylation is found at N68, N125, and N188. 16 disulfide bridges follow: C163-C193, C196-C205, C200-C213, C221-C228, C225-C236, C237-C245, C241-C253, C256-C265, C269-C296, C300-C312, C316-C332, C335-C339, C343-C368, C476-C505, C512-C521, and C516-C529. A glycan (N-linked (GlcNAc...) asparagine) is linked at N260. N-linked (GlcNAc...) asparagine glycosylation is present at N531. Intrachain disulfides connect C532-C541, C545-C561, C564-C577, C568-C585, C588-C597, C601-C624, C627-C635, and C631-C643. N572 carries N-linked (GlcNAc...) asparagine glycosylation. Residue N630 is glycosylated (N-linked (GlcNAc...) asparagine). The chain crosses the membrane as a helical span at residues 654-674 (FIIATVVGVLLFLIIVVVIGI). Over 675 to 1256 (LIKRRRQKIR…PEYLGLDVPV (582 aa)) the chain is Cytoplasmic. The segment at 677-690 (KRRRQKIRKYTMRR) is required for interaction with KPNB1 and EEA1. The Nuclear localization signal signature appears at 677–690 (KRRRQKIRKYTMRR). Residues 721–988 (LRKLKVLGSG…RMARDPQRFV (268 aa)) enclose the Protein kinase domain. Residues 727-735 (LGSGAFGTV) and K754 each bind ATP. The active-site Proton acceptor is the D846. Phosphotyrosine is present on Y878. The disordered stretch occupies residues 1030–1180 (GFFSPDPALG…PKTLSPGKNG (151 aa)). 4 positions are modified to phosphoserine: S1055, S1079, S1084, and S1108. Y1113 carries the post-translational modification Phosphotyrosine. A Phosphotyrosine; by autocatalysis modification is found at Y1140. Residue T1167 is modified to Phosphothreonine. Residues 1196–1198 (EYL) form an interaction with PIK3C2B region. The residue at position 1197 (Y1197) is a Phosphotyrosine. Disordered regions lie at residues 1200–1219 (PRAGTASQPHPSPAFSPAFD) and 1224–1256 (WDQNSSEQGPPPSTFEGTPTAENPEYLGLDVPV). Phosphotyrosine; by autocatalysis is present on Y1249.

Belongs to the protein kinase superfamily. Tyr protein kinase family. EGF receptor subfamily. Homodimer. Heterodimer with EGFR, ERBB3 and ERBB4. Part of a complex with EGFR and either PIK3C2A or PIK3C2B. May interact with PIK3C2B when phosphorylated on Tyr-1197. Interacts with PLXNB1. Interacts (when phosphorylated on Tyr-1249) with MEMO1. Interacts with MUC1. Interacts (when phosphorylated on Tyr-1140) with GRB7 (via SH2 domain). Interacts (when phosphorylated on Tyr-1249) with ERBIN. Interacts with KPNB1, RANBP2, EEA1, CRM1, CLTC, PTK6, RPA194 and ACTB. Interacts (preferentially with the tyrosine phosphorylated form) with CPNE3; this interaction occurs at the cell membrane and is increased in a growth factor heregulin-dependent manner. Interacts with HSP90AA1 and HSP90AB1 in an ATP-dependent manner; the interaction suppresses ERBB2 kinase activity. Interacts with SRC. Interacts with MYOC. Interacts with PRKCABP. Interacts with SORL1; this interaction regulates ERBB2 subcellular distribution by promoting its recycling after internalization from endosomes back to the plasma membrane, hence stimulates ERBB2-mediated signaling. Interacts with SH3BGRL. Interacts with ROR1. Post-translationally, autophosphorylated. Autophosphorylation occurs in trans, i.e. one subunit of the dimeric receptor phosphorylates tyrosine residues on the other subunit. Ligand-binding increases phosphorylation on tyrosine residues. Signaling via SEMA4C promotes phosphorylation at Tyr-1249. Dephosphorylated by PTPN12. Expressed predominantly in uterine epithelial cells. In the muscle, expression localizes to the synaptic sites of muscle fibers.

It is found in the cell membrane. Its subcellular location is the cell projection. The protein resides in the ruffle membrane. The protein localises to the early endosome. It localises to the cytoplasm. It is found in the perinuclear region. Its subcellular location is the nucleus. The catalysed reaction is L-tyrosyl-[protein] + ATP = O-phospho-L-tyrosyl-[protein] + ADP + H(+). In terms of biological role, protein tyrosine kinase that is part of several cell surface receptor complexes, but that apparently needs a coreceptor for ligand binding. Essential component of a neuregulin-receptor complex, although neuregulins do not interact with it alone. GP30 is a potential ligand for this receptor. Regulates outgrowth and stabilization of peripheral microtubules (MTs). Upon ERBB2 activation, the MEMO1-RHOA-DIAPH1 signaling pathway elicits the phosphorylation and thus the inhibition of GSK3B at cell membrane. This prevents the phosphorylation of APC and CLASP2, allowing its association with the cell membrane. In turn, membrane-bound APC allows the localization of MACF1 to the cell membrane, which is required for microtubule capture and stabilization. Its function is as follows. In the nucleus is involved in transcriptional regulation. Associates with the 5'-TCAAATTC-3' sequence in the PTGS2/COX-2 promoter and activates its transcription. Implicated in transcriptional activation of CDKN1A; the function involves STAT3 and SRC. Involved in the transcription of rRNA genes by RNA Pol I and enhances protein synthesis and cell growth. The chain is Receptor tyrosine-protein kinase erbB-2 (Erbb2) from Mus musculus (Mouse).